The sequence spans 159 residues: UPF0699 transmembrane protein YdbS (159 aa).

2 helical membrane-spanning segments follow: residues 22–42 (IIIS…SYYF) and 47–67 (WISG…VFII).

The protein belongs to the UPF0699 family.

It localises to the cell membrane. This chain is UPF0699 transmembrane protein YdbS (ydbS), found in Bacillus subtilis (strain 168).